A 306-amino-acid polypeptide reads, in one-letter code: Tricarboxylate transporter FUM11 (306 aa).

Solcar repeat units follow at residues 18-98, 109-195, and 206-292; these read SDTL…YQKL, FGIL…LKQV, and IGTV…VVEG. Transmembrane regions (helical) follow at residues 24–44, 67–87, 113–133, 170–189, 209–229, and 267–286; these read LVAG…AEFA, GLQW…KTSI, LAGF…SERI, GFWP…LGSY, VKTF…TQPL, and GAVA…FMVY.

It belongs to the mitochondrial carrier (TC 2.A.29) family.

It localises to the mitochondrion inner membrane. Its pathway is mycotoxin biosynthesis. Tricarboxylate transporter; part of the gene cluster that mediates the biosynthesis of fumonisins B1 (FB1), B2 (FB2), B3 (FB3), and B4 (FB4), which are carcinogenic mycotoxins. Within the pathway, FUM11 is involved the addition of the tricarballylic moieties to the carbon backbone. FUM11 makes a tricarboxylic acid precursor available for fumonisin biosynthesis via its export from the mitochondria. The biosynthesis starts with the FUM1-catalyzed carbon chain assembly from one molecule of acetyl-CoA, eight molecules of malonyl-CoA, and two molecules of methionine (in S-adenosyl form). The C18 polyketide chain is released from the enzyme by a nucleophilic attack of a carbanion, which is derived from R-carbon of alanine by decarboxylation, on the carbonyl carbon of polyketide acyl chain. This step is catalyzed by the pyridoxal 5'-phosphate-dependent aminoacyl transferase FUM8. The resultant 3-keto intermediate is then stereospecifically reduced to a 3-hydroxyl product by reductase FUM13. Subsequent oxidations at C-10 by the cytochrome P450 monooxygenase FUM2, C-14 and C-15 by FUM6, FUM12 or FUM15, tricarballylic esterification of the hydroxyl groups on C-14 and C-15 by acyltransferase FUM14, and C-5 hydroxylation by 2-keto-glutarate-dependent dioxygenase FUM3 furnish the biosynthesis of fumonisins. The tricarballylic moieties are most likely derived from the citric acid cycle, and their addition to the carbon backbone may involve FUM7, FUM10, FUM11 and FUM14. This is Tricarboxylate transporter FUM11 from Gibberella moniliformis (strain M3125 / FGSC 7600) (Maize ear and stalk rot fungus).